The primary structure comprises 115 residues: Pro-neuregulin-4, membrane-bound isoform (115 aa).

Over 1-62 (MPTDHEQPCG…SSIPSESNLS (62 aa)) the chain is Extracellular. The region spanning 5–46 (HEQPCGPRHRSFCLNGGICYVIPTIPSPFCRCIENYTGARCE) is the EGF-like domain. Intrachain disulfides connect Cys-9–Cys-23, Cys-17–Cys-34, and Cys-36–Cys-45. 2 N-linked (GlcNAc...) asparagine glycosylation sites follow: Asn-39 and Asn-60. A helical membrane pass occupies residues 63-83 (AAFVVLAVLLTLTIAALCFLC). Over 84-115 (RKGHLQRASSVQCEISLVETNNTRTRHSHREH) the chain is Cytoplasmic.

It belongs to the neuregulin family. Interacts with ERBB4. Post-translationally, proteolytic cleavage close to the plasma membrane on the external face leads to the release of the soluble growth factor form. Extensive glycosylation precedes the proteolytic cleavage. As to expression, highly expressed in pancreas; weakly expressed in muscle.

The protein resides in the cell membrane. The protein localises to the secreted. In terms of biological role, low affinity ligand for the ERBB4 tyrosine kinase receptor. Concomitantly recruits ERBB1 and ERBB2 coreceptors, resulting in ligand-stimulated tyrosine phosphorylation and activation of the ERBB receptors. Does not bind to the ERBB1, ERBB2 and ERBB3 receptors. The chain is Pro-neuregulin-4, membrane-bound isoform (Nrg4) from Mus musculus (Mouse).